Consider the following 281-residue polypeptide: Diaminopimelate epimerase (281 aa).

Residues Asn-13 and Asn-66 each contribute to the substrate site. The active-site Proton donor is Cys-75. Residues 76-77 (GN), Asn-164, Asn-197, and 215-216 (ER) each bind substrate. Cys-224 (proton acceptor) is an active-site residue. 225-226 (GT) serves as a coordination point for substrate.

Belongs to the diaminopimelate epimerase family. In terms of assembly, homodimer.

The protein resides in the cytoplasm. It catalyses the reaction (2S,6S)-2,6-diaminopimelate = meso-2,6-diaminopimelate. The protein operates within amino-acid biosynthesis; L-lysine biosynthesis via DAP pathway; DL-2,6-diaminopimelate from LL-2,6-diaminopimelate: step 1/1. Functionally, catalyzes the stereoinversion of LL-2,6-diaminopimelate (L,L-DAP) to meso-diaminopimelate (meso-DAP), a precursor of L-lysine and an essential component of the bacterial peptidoglycan. This is Diaminopimelate epimerase from Microcystis aeruginosa (strain NIES-843 / IAM M-2473).